The chain runs to 116 residues: uncharacterized protein (116 aa).

Residues 5 to 113 (EVKMVVLSTE…TGNGLVFYSP (109 aa)) form the VOC domain. Residue Lys-76 forms an Isoglutamyl lysine isopeptide (Lys-Gln) (interchain with Q-Cter in protein Pup) linkage.

This is an uncharacterized protein from Mycolicibacterium smegmatis (strain ATCC 700084 / mc(2)155) (Mycobacterium smegmatis).